Here is a 206-residue protein sequence, read N- to C-terminus: Large ribosomal subunit protein uL4 (206 aa).

This sequence belongs to the universal ribosomal protein uL4 family. Part of the 50S ribosomal subunit.

Its function is as follows. One of the primary rRNA binding proteins, this protein initially binds near the 5'-end of the 23S rRNA. It is important during the early stages of 50S assembly. It makes multiple contacts with different domains of the 23S rRNA in the assembled 50S subunit and ribosome. Functionally, forms part of the polypeptide exit tunnel. The chain is Large ribosomal subunit protein uL4 from Rhodopseudomonas palustris (strain BisB5).